The primary structure comprises 628 residues: Serine/threonine-protein phosphatase 2A regulatory subunit psrA (628 aa).

Residues 1–22 are compositionally biased toward polar residues; the sequence is MKNDHINYQQNLSQSPILNSNK. Disordered stretches follow at residues 1–61, 500–558, and 577–628; these read MKND…QIPF, KKKQ…DKPS, and SSHR…YTFT. Low complexity-rich tracts occupy residues 23 to 58 and 524 to 547; these read NQTQ…SPQQ and QINQ…NNNN. Positions 600-618 are enriched in basic and acidic residues; the sequence is NNHTNHDSEIENEVKEDFR.

It belongs to the phosphatase 2A regulatory subunit B56 family. In terms of assembly, PP2A consists of a trimeric holoenzyme, composed of a 37 kDa catalytic subunit (C subunit) and a 65 kDa constant regulatory subunit (A subunit), that associates with a variety of regulatory subunits (B subunit) such as phr2AB (B55) and psrA (B56 homolog). The trimer may partially dissociates into a core 'AC' dimer equally active compared to the trimer. Seems to play a role in proper anterior patterning (pstO and pstAB).

It is found in the cytoplasm. The protein resides in the cytosol. Functionally, involved in developmental cell fate decision. The chain is Serine/threonine-protein phosphatase 2A regulatory subunit psrA (psrA) from Dictyostelium discoideum (Social amoeba).